The sequence spans 406 residues: Argininosuccinate synthase (406 aa).

Residues 11-19 and Ala-38 each bind ATP; that span reads AYSGGLDTS. L-citrulline-binding residues include Tyr-91 and Ser-96. An ATP-binding site is contributed by Gly-121. Thr-123, Asn-127, and Asp-128 together coordinate L-aspartate. Asn-127 is an L-citrulline binding site. L-citrulline is bound by residues Arg-131, Ser-181, Ser-190, Glu-266, and Tyr-278.

Belongs to the argininosuccinate synthase family. Type 1 subfamily. As to quaternary structure, homotetramer.

Its subcellular location is the cytoplasm. The enzyme catalyses L-citrulline + L-aspartate + ATP = 2-(N(omega)-L-arginino)succinate + AMP + diphosphate + H(+). It functions in the pathway amino-acid biosynthesis; L-arginine biosynthesis; L-arginine from L-ornithine and carbamoyl phosphate: step 2/3. The protein is Argininosuccinate synthase of Campylobacter jejuni subsp. jejuni serotype O:6 (strain 81116 / NCTC 11828).